Here is a 132-residue protein sequence, read N- to C-terminus: DNA-directed RNA polymerase subunit omega (132 aa).

It belongs to the RNA polymerase subunit omega family. As to quaternary structure, the RNAP catalytic core consists of 2 alpha, 1 beta, 1 beta' and 1 omega subunit. When a sigma factor is associated with the core the holoenzyme is formed, which can initiate transcription.

The enzyme catalyses RNA(n) + a ribonucleoside 5'-triphosphate = RNA(n+1) + diphosphate. Its function is as follows. Promotes RNA polymerase assembly. Latches the N- and C-terminal regions of the beta' subunit thereby facilitating its interaction with the beta and alpha subunits. This Bartonella quintana (strain Toulouse) (Rochalimaea quintana) protein is DNA-directed RNA polymerase subunit omega.